Reading from the N-terminus, the 250-residue chain is Uracil-DNA glycosylase (250 aa).

Catalysis depends on Asp78, which acts as the Proton acceptor. Positions 228 to 250 are disordered; that stretch reads RGQKPVDWSGEQNNASRQGEFAL.

The protein belongs to the uracil-DNA glycosylase (UDG) superfamily. UNG family.

It is found in the cytoplasm. The catalysed reaction is Hydrolyzes single-stranded DNA or mismatched double-stranded DNA and polynucleotides, releasing free uracil.. Excises uracil residues from the DNA which can arise as a result of misincorporation of dUMP residues by DNA polymerase or due to deamination of cytosine. This is Uracil-DNA glycosylase from Bordetella pertussis (strain Tohama I / ATCC BAA-589 / NCTC 13251).